Here is a 118-residue protein sequence, read N- to C-terminus: Small ribosomal subunit protein uS13 (118 aa).

A disordered region spans residues 92–118; it reads RRGLPVRGQRTKTNARTRKGPRKPIKK.

This sequence belongs to the universal ribosomal protein uS13 family. Part of the 30S ribosomal subunit. Forms a loose heterodimer with protein S19. Forms two bridges to the 50S subunit in the 70S ribosome.

Functionally, located at the top of the head of the 30S subunit, it contacts several helices of the 16S rRNA. In the 70S ribosome it contacts the 23S rRNA (bridge B1a) and protein L5 of the 50S subunit (bridge B1b), connecting the 2 subunits; these bridges are implicated in subunit movement. Contacts the tRNAs in the A and P-sites. The polypeptide is Small ribosomal subunit protein uS13 (Pectobacterium carotovorum subsp. carotovorum (strain PC1)).